The chain runs to 243 residues: Probable transcriptional regulatory protein BAPKO_0024/BafPKo_0025 (243 aa).

The protein belongs to the TACO1 family.

It localises to the cytoplasm. The sequence is that of Probable transcriptional regulatory protein BAPKO_0024/BafPKo_0025 from Borreliella afzelii (strain PKo) (Borrelia afzelii).